The following is a 366-amino-acid chain: MISSFHRPTVARVNLQAIKENVASVQKHIPLGVKTYAVVKADAYGHGAVQVSKALLPQVDGYCVSNLDEALQLRQAGIDKEILILGVLLPNELELAVANAITVTIASLDWIALARLEKKECQGLKVHVKVDSGMGRIGLRSSKAVNLLIDSLKELGADVEGIFTHFATADEADDTKFNQQLQFFKKLIAGLEDKPRLVHASNSATSIWHSDTIFNAVRLGIVSYGLNPSGSDLSLPFPLQEALSLESSLVHVKMISAGDTVGYGATYTAKKSEYVGTVPIGYADGWTRNMQGFSVLVDGQFCEIIGRVSMDQLTIRLPKAYPLGTKVTLIGSNQQKNISTTDIANYRNTINYEVLCLLSDRIPRIY.

Catalysis depends on K40, which acts as the Proton acceptor; specific for D-alanine. K40 bears the N6-(pyridoxal phosphate)lysine mark. R136 contacts substrate. Catalysis depends on Y263, which acts as the Proton acceptor; specific for L-alanine. A substrate-binding site is contributed by M310.

It belongs to the alanine racemase family. Pyridoxal 5'-phosphate is required as a cofactor.

It catalyses the reaction L-alanine = D-alanine. It functions in the pathway amino-acid biosynthesis; D-alanine biosynthesis; D-alanine from L-alanine: step 1/1. Catalyzes the interconversion of L-alanine and D-alanine. May also act on other amino acids. This chain is Alanine racemase (alr), found in Streptococcus pyogenes serotype M28 (strain MGAS6180).